The chain runs to 86 residues: MKNLISELLLRLAQKEEESKELVAQVEALEIIVTAMLRNMAQNEQQKLIHQVEDALDGVKPDASVPDYDTELLRQYVKKLLRHPRS.

A coiled-coil region spans residues 1 to 36 (MKNLISELLLRLAQKEEESKELVAQVEALEIIVTAM).

Belongs to the IraP family. In terms of assembly, interacts with RssB.

Its subcellular location is the cytoplasm. Inhibits RpoS proteolysis by regulating RssB activity, thereby increasing the stability of the sigma stress factor RpoS especially during phosphate starvation, but also in stationary phase and during nitrogen starvation. Its effect on RpoS stability is due to its interaction with RssB, which probably blocks the interaction of RssB with RpoS, and the consequent delivery of the RssB-RpoS complex to the ClpXP protein degradation pathway. The chain is Anti-adapter protein IraP from Citrobacter koseri (strain ATCC BAA-895 / CDC 4225-83 / SGSC4696).